Reading from the N-terminus, the 302-residue chain is 33 kDa chaperonin (302 aa).

Cystine bridges form between cysteine 234–cysteine 236 and cysteine 267–cysteine 270.

The protein belongs to the HSP33 family. Post-translationally, under oxidizing conditions two disulfide bonds are formed involving the reactive cysteines. Under reducing conditions zinc is bound to the reactive cysteines and the protein is inactive.

Its subcellular location is the cytoplasm. In terms of biological role, redox regulated molecular chaperone. Protects both thermally unfolding and oxidatively damaged proteins from irreversible aggregation. Plays an important role in the bacterial defense system toward oxidative stress. The sequence is that of 33 kDa chaperonin from Neisseria meningitidis serogroup A / serotype 4A (strain DSM 15465 / Z2491).